We begin with the raw amino-acid sequence, 299 residues long: GTPase Era (299 aa).

The region spanning R5 to P175 is the Era-type G domain. The segment at G13–S20 is G1. G13–S20 contacts GTP. The tract at residues Q39–H43 is G2. A G3 region spans residues D60–G63. GTP is bound by residues D60–L64 and T124–D127. The interval T124 to D127 is G4. Residues V154–A156 are G5. Residues V206–K285 form the KH type-2 domain.

It belongs to the TRAFAC class TrmE-Era-EngA-EngB-Septin-like GTPase superfamily. Era GTPase family. As to quaternary structure, monomer.

It localises to the cell envelope. It is found in the secreted. The protein localises to the cell wall. Exhibits GTPase activity. Binds RNA but is probably not involved in ribosome assembly in mycobacteria. This Mycobacterium avium (strain 104) protein is GTPase Era.